The primary structure comprises 476 residues: Protein transport protein Sec61 subunit alpha isoform 1 (476 aa).

The Cytoplasmic portion of the chain corresponds to 1–33 (MGIKFLEVIKPFCVILPEIQKPERKIQFKEKVL). Residues 34 to 53 (WTAITLFIFLVCCQIPLFGI) form a helical membrane-spanning segment. Topologically, residues 54–76 (MSSDSADPFYWMRVILASNRGTL) are lumenal. Residues 77–96 (MELGISPIVTSGLIMQLLAG) traverse the membrane as a helical segment. The Cytoplasmic segment spans residues 97–117 (AKIIEVGDTPKDRALFNGAQK). A helical membrane pass occupies residues 118-138 (LFGMTITIGQSIVYVMTGMYG). Over 139–144 (DPSEMG) the chain is Lumenal. A helical transmembrane segment spans residues 145–165 (AGVCLLITIQLFVAGLIVLLL). The Cytoplasmic segment spans residues 166-172 (DELLQKG). A helical membrane pass occupies residues 173-193 (YGLGSGISLFIATNICETIVW). At 194 to 240 (KAFSPTTVNTGRGMEFEGAIIALFHLLATRTDKVRALREAFYRQNLP) the chain is on the lumenal side. Residues 241 to 261 (NLMNLIATIFVFAVVIYFQGF) traverse the membrane as a helical segment. Over 262-288 (RVDLPIKSARYRGQYNTYPIKLFYTSN) the chain is Cytoplasmic. A helical transmembrane segment spans residues 289 to 309 (IPIILQSALVSNLYVISQMLS). Residues 310–354 (ARFSGNLLVSLLGTWSDTSSGGPARAYPVGGLCYYLSPPESFGSV) lie on the Lumenal side of the membrane. The helical transmembrane segment at 355-375 (LEDPVHAVVYIVFMLGSCAFF) threads the bilayer. Over 376-420 (SKTWIEVSGSSAKDVAKQLKEQQMVMRGHRETSMVHELNRYIPTA) the chain is Cytoplasmic. A helical transmembrane segment spans residues 421–441 (AAFGGLCIGALSVLADFLGAI). Residues 442–445 (GSGT) lie on the Lumenal side of the membrane. The chain crosses the membrane as a helical span at residues 446 to 462 (GILLAVTIIYQYFEIFV). The Cytoplasmic segment spans residues 463–476 (KEQSEVGSMGALLF).

It belongs to the SecY/SEC61-alpha family. The SEC61 channel-forming translocon complex consists of channel-forming core components SEC61A1, SEC61B and SEC61G and different auxiliary components such as SEC62 and SEC63. The SEC61 channel associates with the multi-pass translocon (MPT) complex.

The protein resides in the endoplasmic reticulum membrane. Component of SEC61 channel-forming translocon complex that mediates transport of signal peptide-containing precursor polypeptides across the endoplasmic reticulum (ER). Forms a ribosome receptor and a gated pore in the ER membrane, both functions required for cotranslational translocation of nascent polypeptides. May cooperate with auxiliary protein SEC62, SEC63 and HSPA5/BiP to enable post-translational transport of small presecretory proteins. The SEC61 channel is also involved in ER membrane insertion of transmembrane proteins: it mediates membrane insertion of the first few transmembrane segments of proteins, while insertion of subsequent transmembrane regions of multi-pass membrane proteins is mediated by the multi-pass translocon (MPT) complex. The SEC61 channel cooperates with the translocating protein TRAM1 to import nascent proteins into the ER. Controls the passive efflux of calcium ions from the ER lumen to the cytosol through SEC61 channel, contributing to the maintenance of cellular calcium homeostasis. Plays a critical role in nephrogenesis, specifically at pronephros stage. This chain is Protein transport protein Sec61 subunit alpha isoform 1 (SEC61A1), found in Bos taurus (Bovine).